A 305-amino-acid chain; its full sequence is UDP-3-O-acyl-N-acetylglucosamine deacetylase (305 aa).

Positions 78, 237, and 241 each coordinate Zn(2+). The active-site Proton donor is the histidine 264.

The protein belongs to the LpxC family. The cofactor is Zn(2+).

It carries out the reaction a UDP-3-O-[(3R)-3-hydroxyacyl]-N-acetyl-alpha-D-glucosamine + H2O = a UDP-3-O-[(3R)-3-hydroxyacyl]-alpha-D-glucosamine + acetate. Its pathway is glycolipid biosynthesis; lipid IV(A) biosynthesis; lipid IV(A) from (3R)-3-hydroxytetradecanoyl-[acyl-carrier-protein] and UDP-N-acetyl-alpha-D-glucosamine: step 2/6. Its function is as follows. Catalyzes the hydrolysis of UDP-3-O-myristoyl-N-acetylglucosamine to form UDP-3-O-myristoylglucosamine and acetate, the committed step in lipid A biosynthesis. This chain is UDP-3-O-acyl-N-acetylglucosamine deacetylase, found in Burkholderia ambifaria (strain MC40-6).